A 141-amino-acid polypeptide reads, in one-letter code: Large ribosomal subunit protein uL11 (141 aa).

Belongs to the universal ribosomal protein uL11 family. As to quaternary structure, part of the ribosomal stalk of the 50S ribosomal subunit. Interacts with L10 and the large rRNA to form the base of the stalk. L10 forms an elongated spine to which L12 dimers bind in a sequential fashion forming a multimeric L10(L12)X complex. One or more lysine residues are methylated.

Its function is as follows. Forms part of the ribosomal stalk which helps the ribosome interact with GTP-bound translation factors. The protein is Large ribosomal subunit protein uL11 of Clostridium botulinum (strain Alaska E43 / Type E3).